A 329-amino-acid chain; its full sequence is L-lactate dehydrogenase (329 aa).

NAD(+)-binding positions include valine 18, glutamate 39, lysine 46, tyrosine 71, and 85 to 86 (GA). Residues glutamine 88 and arginine 94 each contribute to the substrate site. NAD(+) is bound by residues serine 107, 124-126 (AAN), and serine 149. Residue 126 to 129 (NPVD) participates in substrate binding. 154–157 (DSAR) contacts substrate. Beta-D-fructose 1,6-bisphosphate contacts are provided by arginine 159 and histidine 174. Residue histidine 181 is the Proton acceptor of the active site. Tyrosine 226 carries the post-translational modification Phosphotyrosine. Threonine 235 serves as a coordination point for substrate.

The protein belongs to the LDH/MDH superfamily. LDH family. As to quaternary structure, homotetramer.

The protein resides in the cytoplasm. It carries out the reaction (S)-lactate + NAD(+) = pyruvate + NADH + H(+). It functions in the pathway fermentation; pyruvate fermentation to lactate; (S)-lactate from pyruvate: step 1/1. With respect to regulation, allosterically activated by fructose 1,6-bisphosphate (FBP). Catalyzes the conversion of lactate to pyruvate. This chain is L-lactate dehydrogenase, found in Streptococcus agalactiae serotype V (strain ATCC BAA-611 / 2603 V/R).